The following is a 1297-amino-acid chain: Phosphoribosylformylglycinamidine synthase (1297 aa).

The interval 301 to 329 is disordered; that stretch reads TAISPFPGAATGSGGEIRDEGATGRGAKP. ATP is bound at residue 308 to 319; it reads GAATGSGGEIRD. The Mg(2+) site is built by Asp-680, Glu-719, Asn-723, and Asp-887. An ATP-binding site is contributed by Ser-889. The Glutamine amidotransferase type-1 domain maps to 1045–1297; it reads IAILREQGVN…RLFRNARMVF (253 aa). Cys-1138 acts as the Nucleophile in catalysis. Catalysis depends on residues His-1263 and Glu-1265.

In the N-terminal section; belongs to the FGAMS family. Monomer.

It is found in the cytoplasm. The enzyme catalyses N(2)-formyl-N(1)-(5-phospho-beta-D-ribosyl)glycinamide + L-glutamine + ATP + H2O = 2-formamido-N(1)-(5-O-phospho-beta-D-ribosyl)acetamidine + L-glutamate + ADP + phosphate + H(+). It participates in purine metabolism; IMP biosynthesis via de novo pathway; 5-amino-1-(5-phospho-D-ribosyl)imidazole from N(2)-formyl-N(1)-(5-phospho-D-ribosyl)glycinamide: step 1/2. Phosphoribosylformylglycinamidine synthase involved in the purines biosynthetic pathway. Catalyzes the ATP-dependent conversion of formylglycinamide ribonucleotide (FGAR) and glutamine to yield formylglycinamidine ribonucleotide (FGAM) and glutamate. The polypeptide is Phosphoribosylformylglycinamidine synthase (Haemophilus influenzae (strain ATCC 51907 / DSM 11121 / KW20 / Rd)).